A 409-amino-acid polypeptide reads, in one-letter code: Lysosome-associated membrane glycoprotein 1 (409 aa).

The signal sequence occupies residues 1 to 25; that stretch reads MAAPGGARRRPLLLLLFAGLVHGAS. Positions 26–187 are first lumenal domain; that stretch reads AVFVVKNGNG…SNFSREETRC (162 aa). Over 26–374 the chain is Lumenal; it reads AVFVVKNGNG…EECQLDENSM (349 aa). 10 N-linked (GlcNAc...) asparagine glycosylation sites follow: Asn34, Asn59, Asn72, Asn80, Asn103, Asn117, Asn126, Asn146, Asn161, and Asn179. A disulfide bridge connects residues Cys38 and Cys76. A disulfide bridge connects residues Cys151 and Cys187. The disordered stretch occupies residues 180–207; sequence FSREETRCEQDLPTPTTPPQPAPTPAPA. The hinge stretch occupies residues 188 to 219; sequence EQDLPTPTTPPQPAPTPAPASPAVFRYNVSGS. Pro residues predominate over residues 194–207; it reads PTTPPQPAPTPAPA. Asn215, Asn220, Asn241, Asn253, Asn260, Asn285, Asn299, and Asn314 each carry an N-linked (GlcNAc...) asparagine glycan. The tract at residues 220–374 is second lumenal domain; the sequence is NGTCLLASMG…EECQLDENSM (155 aa). Cysteines 223 and 261 form a disulfide. Cys330 and Cys367 are joined by a disulfide. Residues 375–398 traverse the membrane as a helical segment; it reads LIPIAVGGALAGLVLIVLLAYLIG. The Cytoplasmic portion of the chain corresponds to 399–409; the sequence is RKRSHAGYQTI.

It belongs to the LAMP family. As to quaternary structure, interacts with ABCB9; this interaction strongly stabilizes ABCB9 and protects ABCB9 against lysosomal degradation. Interacts with FURIN. Interacts with TMEM175; inhibiting the proton channel activity of TMEM175. O- and N-glycosylated; some of the N-glycans attached to LAMP-1 are polylactosaminoglycans.

It localises to the lysosome membrane. The protein localises to the endosome membrane. It is found in the late endosome membrane. The protein resides in the cell membrane. Its subcellular location is the cytolytic granule membrane. Lysosomal membrane glycoprotein which plays an important role in lysosome biogenesis, lysosomal pH regulation, autophagy and cholesterol homeostasis. Acts as an important regulator of lysosomal lumen pH regulation by acting as a direct inhibitor of the proton channel TMEM175, facilitating lysosomal acidification for optimal hydrolase activity. Also plays an important role in NK-cells cytotoxicity. Mechanistically, participates in cytotoxic granule movement to the cell surface and perforin trafficking to the lytic granule. In addition, protects NK-cells from degranulation-associated damage induced by their own cytotoxic granule content. Presents carbohydrate ligands to selectins. This is Lysosome-associated membrane glycoprotein 1 (LAMP1) from Bos taurus (Bovine).